A 178-amino-acid chain; its full sequence is Large ribosomal subunit protein uL6 (178 aa).

The protein belongs to the universal ribosomal protein uL6 family. In terms of assembly, part of the 50S ribosomal subunit.

This protein binds to the 23S rRNA, and is important in its secondary structure. It is located near the subunit interface in the base of the L7/L12 stalk, and near the tRNA binding site of the peptidyltransferase center. The sequence is that of Large ribosomal subunit protein uL6 from Helicobacter acinonychis (strain Sheeba).